A 445-amino-acid chain; its full sequence is MSERKFFGTDGIRGKVGSGQMTPELALKLGWAAGRVLSRSGTNKVIIGKDTRISGYMFESALEAGLSAAGLNVMLMGPMPTPAVAYLTRTFRAEAGVVISASHNPYYDNGIKFFSNDGSKLDDNLELEIEAELEKPLECVESHLLGKVSRIEDARGRYIEYCKGNFPADQTLTGLKIVVDCAHGATYHIAPAVFRELGAEVIAIGDKPNGVNINDKVGATSMAKICETVLTEGADLGIALDGDGDRIMMVNSRGEVIDGDQILYILACDAKARGVLRGGVVGTLMSNLGLDLALQALDIPFARSKVGDRYVMELLKELDWRIGGENSGHILNLDHGTTGDGIVAGILVLAAMRRQNATLEQLTAPMEMLPQVLVNVRFEGEHDPLSSDKVKAAQALVESQLGARGRVLLRKSGTEPLIRVMVEGDDHNTVLAHANLIADAVKSAS.

S102 acts as the Phosphoserine intermediate in catalysis. Mg(2+) is bound by residues S102, D241, D243, and D245. S102 carries the phosphoserine modification.

This sequence belongs to the phosphohexose mutase family. It depends on Mg(2+) as a cofactor. In terms of processing, activated by phosphorylation.

The enzyme catalyses alpha-D-glucosamine 1-phosphate = D-glucosamine 6-phosphate. In terms of biological role, catalyzes the conversion of glucosamine-6-phosphate to glucosamine-1-phosphate. The polypeptide is Phosphoglucosamine mutase 1 (Shewanella sp. (strain MR-4)).